Here is a 727-residue protein sequence, read N- to C-terminus: Elongation factor 2 (727 aa).

One can recognise a tr-type G domain in the interval 19 to 260; that stretch reads DQIRNMGICA…MSIKHLPNPL (242 aa). Residues 28–35, 94–98, and 148–151 each bind GTP; these read AHIDHGKT, DTPGH, and NKVD. Histidine 603 carries the diphthamide modification.

Belongs to the TRAFAC class translation factor GTPase superfamily. Classic translation factor GTPase family. EF-G/EF-2 subfamily.

The protein resides in the cytoplasm. Catalyzes the GTP-dependent ribosomal translocation step during translation elongation. During this step, the ribosome changes from the pre-translocational (PRE) to the post-translocational (POST) state as the newly formed A-site-bound peptidyl-tRNA and P-site-bound deacylated tRNA move to the P and E sites, respectively. Catalyzes the coordinated movement of the two tRNA molecules, the mRNA and conformational changes in the ribosome. The sequence is that of Elongation factor 2 from Methanococcus maripaludis (strain C5 / ATCC BAA-1333).